The following is a 381-amino-acid chain: Erythronate-4-phosphate dehydrogenase (381 aa).

2 residues coordinate substrate: Ser45 and Thr66. Residues Asp146 and Thr173 each contribute to the NAD(+) site. Arg206 is an active-site residue. NAD(+) is bound at residue Asp230. The active site involves Glu235. The active-site Proton donor is His252. Gly255 contacts NAD(+). Residue Tyr256 coordinates substrate.

Belongs to the D-isomer specific 2-hydroxyacid dehydrogenase family. PdxB subfamily. Homodimer.

The protein resides in the cytoplasm. The enzyme catalyses 4-phospho-D-erythronate + NAD(+) = (R)-3-hydroxy-2-oxo-4-phosphooxybutanoate + NADH + H(+). It functions in the pathway cofactor biosynthesis; pyridoxine 5'-phosphate biosynthesis; pyridoxine 5'-phosphate from D-erythrose 4-phosphate: step 2/5. In terms of biological role, catalyzes the oxidation of erythronate-4-phosphate to 3-hydroxy-2-oxo-4-phosphonooxybutanoate. This is Erythronate-4-phosphate dehydrogenase from Hahella chejuensis (strain KCTC 2396).